The following is a 595-amino-acid chain: MAGSTAGYGQIIEYIQDKLYLASYDHTPDAKTPFPYPAEQPKSPSKRRAQASPSKKRSPVYFTVDDTLLYNSFHADFGPLHIGHLYRFAVHFHDLLAANNDRAIVFYSRTDARSRANAACLVACYMVLIQSWPPHLALAPIAQADPPYMPFRDAGYSQADFILNIQDVVYGVWKAKEQGVCGLRDFSLEEYEKFERVDMGDFNWISPHFLAFASPQHQPVAPIPRDSPEYAALPSTVSEVRSSRLPLPFKNVLEHFATRGVGLVVRLNSELYSPSYFTALGISHIDMIFEDGTCPPLPLVKKFIRMAHEMINVKHKAIAVHCKAGLGRTGCLIGAYLIYRYGFTANEVIAFMRFMRPGMVVGPQQHWLHLNQGSFREWWFEDCMKEKLAQMQPNPVTPGRSPAKHRAAAVTTPPQNGHSKRSALGEIDNNEATPIYDDNLPAPTPGQPRKSHRKDSRHHPYSRTASGSLVVDKDTRKTRRSTDSSESEEETQLRMLAKQRSSKSPAASPGQRSISYSATVTASYTLNDDIHEDRENWGGAAQPPKTPVTSKTSGAVSVSKVRSSSRRVTGESKGVRKPSGRIGSTGSPVRVKAQA.

The interval 32–57 (TPFPYPAEQPKSPSKRRAQASPSKKR) is disordered. The span at 44–57 (PSKRRAQASPSKKR) shows a compositional bias: basic residues. Residues 233 to 381 (LPSTVSEVRS…QGSFREWWFE (149 aa)) enclose the Tyrosine-protein phosphatase domain. C322 serves as the catalytic Phosphocysteine intermediate. Residues 392 to 595 (QPNPVTPGRS…GSPVRVKAQA (204 aa)) are disordered. Basic residues predominate over residues 449–461 (RKSHRKDSRHHPY). A compositionally biased stretch (basic and acidic residues) spans 471-483 (VDKDTRKTRRSTD). Positions 502–526 (SKSPAASPGQRSISYSATVTASYTL) are enriched in polar residues.

This sequence belongs to the protein-tyrosine phosphatase family. Non-receptor class CDC14 subfamily.

Its subcellular location is the nucleus. It localises to the cytoplasm. The protein resides in the cell septum. The catalysed reaction is O-phospho-L-tyrosyl-[protein] + H2O = L-tyrosyl-[protein] + phosphate. In terms of biological role, protein phosphatase which antagonizes mitotic cyclin-dependent kinase nimX, the inactivation of which is essential for exit from mitosis. To access its substrates, is released from nucleolar sequestration during mitosis. Plays an essential in coordinating the nuclear division cycle with cytokinesis through the cytokinesis checkpoint. Involved in chromosome segregation, where it is required for meiosis I spindle dissambly as well as for establishing two consecutive chromosome segregation phases. Required for the transcription of the two major endoglucanase genes eglA and eglB and growth on synthetic cellulose as the sole carbon source. This Emericella nidulans (strain FGSC A4 / ATCC 38163 / CBS 112.46 / NRRL 194 / M139) (Aspergillus nidulans) protein is Tyrosine-protein phosphatase cdcA (cdcA).